A 391-amino-acid polypeptide reads, in one-letter code: Pectin acetylesterase 7 (391 aa).

The N-terminal stretch at 1-23 (MGRLKQCWSSLLVLAVLVIGTGA) is a signal peptide. Catalysis depends on charge relay system residues serine 171, aspartate 267, and histidine 334.

Belongs to the pectinacetylesterase family.

The protein localises to the secreted. It localises to the cell wall. Its function is as follows. Hydrolyzes acetyl esters in homogalacturonan regions of pectin. In type I primary cell wall, galacturonic acid residues of pectin can be acetylated at the O-2 and O-3 positions. Decreasing the degree of acetylation of pectin gels in vitro alters their physical properties. The chain is Pectin acetylesterase 7 from Arabidopsis thaliana (Mouse-ear cress).